The sequence spans 80 residues: Acyl carrier protein (80 aa).

One can recognise a Carrier domain in the interval Met-1 to Asn-76. At Ser-36 the chain carries O-(pantetheine 4'-phosphoryl)serine.

Belongs to the acyl carrier protein (ACP) family. 4'-phosphopantetheine is transferred from CoA to a specific serine of apo-ACP by AcpS. This modification is essential for activity because fatty acids are bound in thioester linkage to the sulfhydryl of the prosthetic group.

The protein localises to the cytoplasm. It functions in the pathway lipid metabolism; fatty acid biosynthesis. Its function is as follows. Carrier of the growing fatty acid chain in fatty acid biosynthesis. In Syntrophus aciditrophicus (strain SB), this protein is Acyl carrier protein.